Consider the following 184-residue polypeptide: dITP/XTP pyrophosphatase (184 aa).

Residue threonine 8–lysine 13 coordinates substrate. 2 residues coordinate Mg(2+): glutamate 37 and aspartate 66. Aspartate 66 (proton acceptor) is an active-site residue. Substrate contacts are provided by residues serine 67, phenylalanine 142 to aspartate 145, lysine 163, and histidine 168 to arginine 169.

It belongs to the HAM1 NTPase family. In terms of assembly, homodimer. It depends on Mg(2+) as a cofactor.

The enzyme catalyses XTP + H2O = XMP + diphosphate + H(+). The catalysed reaction is dITP + H2O = dIMP + diphosphate + H(+). It carries out the reaction ITP + H2O = IMP + diphosphate + H(+). Functionally, pyrophosphatase that catalyzes the hydrolysis of nucleoside triphosphates to their monophosphate derivatives, with a high preference for the non-canonical purine nucleotides XTP (xanthosine triphosphate), dITP (deoxyinosine triphosphate) and ITP. Seems to function as a house-cleaning enzyme that removes non-canonical purine nucleotides from the nucleotide pool, thus preventing their incorporation into DNA/RNA and avoiding chromosomal lesions. This chain is dITP/XTP pyrophosphatase, found in Methanosarcina acetivorans (strain ATCC 35395 / DSM 2834 / JCM 12185 / C2A).